A 147-amino-acid chain; its full sequence is Small ribosomal subunit protein bS6 (147 aa).

A disordered region spans residues 96–147; it reads VTEPSPMMKAKEERFTKRDDREERSDRSEAPRAEAPAKAEAPAKAEDEAAAE. The segment covering 104–147 has biased composition (basic and acidic residues); sequence KAKEERFTKRDDREERSDRSEAPRAEAPAKAEAPAKAEDEAAAE.

Belongs to the bacterial ribosomal protein bS6 family.

Functionally, binds together with bS18 to 16S ribosomal RNA. The polypeptide is Small ribosomal subunit protein bS6 (Photobacterium profundum (strain SS9)).